Reading from the N-terminus, the 726-residue chain is Beta-adducin (726 aa).

The disordered stretch occupies residues 1–25 (MSEETVPEAASPPPPQGQPYFDRFS). 2 positions are modified to phosphoserine: S11 and S25. T55 carries the post-translational modification Phosphothreonine; by PKA. A phosphoserine mark is found at S60 and S344. The interval 425–444 (KQQKEKTRWLNTPNTYLRVN) is interaction with calmodulin. A disordered region spans residues 525–726 (AEKSRSPSTE…KSKKKEKVES (202 aa)). Residues S530 and S532 each carry the phosphoserine modification. Phosphothreonine is present on T533. At S535 the chain carries Phosphoserine. The span at 566 to 586 (EEYKKEVERKKLELDGEKETA) shows a compositional bias: basic and acidic residues. Residues 588–606 (EEPGSPAKSAPASPVQSPA) are compositionally biased toward low complexity. S592, S596, S600, and S604 each carry phosphoserine. Phosphothreonine is present on T611. Residues S613, S617, S619, and S621 each carry the phosphoserine modification. Residues 621-631 (SLEEGTKKTET) show a composition bias toward basic and acidic residues. The span at 632 to 645 (SKAATTEPETTQPE) shows a compositional bias: low complexity. Residues 665–674 (GLSQMTTSAD) are compositionally biased toward polar residues. At T675 the chain carries Phosphothreonine. Phosphoserine occurs at positions 686, 689, 693, 697, 699, and 701. Residues 689 to 701 (SGPMSPEGSPSKS) are compositionally biased toward low complexity. Residues 702–726 (PSKKKKKFRTPSFLKKSKKKEKVES) show a composition bias toward basic residues. S703 carries the phosphoserine; by PKC modification. The tract at residues 704–721 (KKKKKFRTPSFLKKSKKK) is interaction with calmodulin. S713 is subject to Phosphoserine; by PKA and PKC.

The protein belongs to the aldolase class II family. Adducin subfamily. As to quaternary structure, heterodimer of an alpha and a beta subunit. Found in a complex with ADD2, DMTN and SLC2A1. Interacts with SLC2A1. In terms of processing, the N-terminus is blocked. Expressed mainly in brain, spleen, kidney cortex and medulla, and heart. Also expressed in human umbilical vein endothelial cells, human vascular smooth muscle cells, kidney tubular cells and K-562 cell line.

It is found in the cytoplasm. It localises to the cytoskeleton. Its subcellular location is the cell membrane. Functionally, membrane-cytoskeleton-associated protein that promotes the assembly of the spectrin-actin network. Binds to the erythrocyte membrane receptor SLC2A1/GLUT1 and may therefore provide a link between the spectrin cytoskeleton to the plasma membrane. Binds to calmodulin. Calmodulin binds preferentially to the beta subunit. The polypeptide is Beta-adducin (ADD2) (Homo sapiens (Human)).